A 327-amino-acid chain; its full sequence is tRNA dimethylallyltransferase (327 aa).

Position 14-21 (14-21 (GPTASGKT)) interacts with ATP. 16–21 (TASGKT) contacts substrate. Interaction with substrate tRNA regions lie at residues 39-42 (DSAL) and 163-167 (QRIQR).

This sequence belongs to the IPP transferase family. In terms of assembly, monomer. Mg(2+) serves as cofactor.

It catalyses the reaction adenosine(37) in tRNA + dimethylallyl diphosphate = N(6)-dimethylallyladenosine(37) in tRNA + diphosphate. In terms of biological role, catalyzes the transfer of a dimethylallyl group onto the adenine at position 37 in tRNAs that read codons beginning with uridine, leading to the formation of N6-(dimethylallyl)adenosine (i(6)A). The sequence is that of tRNA dimethylallyltransferase from Xanthomonas oryzae pv. oryzae (strain KACC10331 / KXO85).